Consider the following 85-residue polypeptide: UPF0410 protein YdaS (85 aa).

A run of 3 helical transmembrane segments spans residues 2 to 22 (LSFL…SAIV), 28 to 48 (GGIF…HGLL), and 58 to 78 (FAIF…GLIF).

The protein belongs to the UPF0410 family.

It is found in the cell membrane. The sequence is that of UPF0410 protein YdaS (ydaS) from Bacillus subtilis (strain 168).